A 337-amino-acid polypeptide reads, in one-letter code: RNA 3'-terminal phosphate cyclase (337 aa).

ATP-binding positions include Q100 and 281-285 (YMGDQ). H306 functions as the Tele-AMP-histidine intermediate in the catalytic mechanism.

Belongs to the RNA 3'-terminal cyclase family. Type 1 subfamily.

It is found in the cytoplasm. The enzyme catalyses a 3'-end 3'-phospho-ribonucleotide-RNA + ATP = a 3'-end 2',3'-cyclophospho-ribonucleotide-RNA + AMP + diphosphate. In terms of biological role, catalyzes the conversion of 3'-phosphate to a 2',3'-cyclic phosphodiester at the end of RNA. The mechanism of action of the enzyme occurs in 3 steps: (A) adenylation of the enzyme by ATP; (B) transfer of adenylate to an RNA-N3'P to produce RNA-N3'PP5'A; (C) and attack of the adjacent 2'-hydroxyl on the 3'-phosphorus in the diester linkage to produce the cyclic end product. The biological role of this enzyme is unknown but it is likely to function in some aspects of cellular RNA processing. In Methanothermobacter thermautotrophicus (strain ATCC 29096 / DSM 1053 / JCM 10044 / NBRC 100330 / Delta H) (Methanobacterium thermoautotrophicum), this protein is RNA 3'-terminal phosphate cyclase (rtcA).